We begin with the raw amino-acid sequence, 364 residues long: Coproporphyrin III ferrochelatase (364 aa).

Fe-coproporphyrin III contacts are provided by Arg-29 and Tyr-118. Residues His-169 and Glu-250 each coordinate Fe(2+).

This sequence belongs to the ferrochelatase family.

Its subcellular location is the cytoplasm. The catalysed reaction is Fe-coproporphyrin III + 2 H(+) = coproporphyrin III + Fe(2+). The protein operates within porphyrin-containing compound metabolism; protoheme biosynthesis. Its function is as follows. Involved in coproporphyrin-dependent heme b biosynthesis. Catalyzes the insertion of ferrous iron into coproporphyrin III to form Fe-coproporphyrin III. This is Coproporphyrin III ferrochelatase from Streptococcus pneumoniae (strain 70585).